The chain runs to 232 residues: 5'-methylthioadenosine/S-adenosylhomocysteine nucleosidase (232 aa).

Catalysis depends on Glu-12, which acts as the Proton acceptor. Residues Gly-78, Ile-152, and 173–174 (ME) contribute to the substrate site. Asp-197 functions as the Proton donor in the catalytic mechanism.

This sequence belongs to the PNP/UDP phosphorylase family. MtnN subfamily. As to quaternary structure, homodimer.

The catalysed reaction is S-adenosyl-L-homocysteine + H2O = S-(5-deoxy-D-ribos-5-yl)-L-homocysteine + adenine. The enzyme catalyses S-methyl-5'-thioadenosine + H2O = 5-(methylsulfanyl)-D-ribose + adenine. It carries out the reaction 5'-deoxyadenosine + H2O = 5-deoxy-D-ribose + adenine. The protein operates within amino-acid biosynthesis; L-methionine biosynthesis via salvage pathway; S-methyl-5-thio-alpha-D-ribose 1-phosphate from S-methyl-5'-thioadenosine (hydrolase route): step 1/2. In terms of biological role, catalyzes the irreversible cleavage of the glycosidic bond in both 5'-methylthioadenosine (MTA) and S-adenosylhomocysteine (SAH/AdoHcy) to adenine and the corresponding thioribose, 5'-methylthioribose and S-ribosylhomocysteine, respectively. Also cleaves 5'-deoxyadenosine, a toxic by-product of radical S-adenosylmethionine (SAM) enzymes, into 5-deoxyribose and adenine. Thus, is required for in vivo function of the radical SAM enzymes biotin synthase and lipoic acid synthase, that are inhibited by 5'-deoxyadenosine accumulation. The protein is 5'-methylthioadenosine/S-adenosylhomocysteine nucleosidase of Pectobacterium carotovorum subsp. carotovorum (strain PC1).